The chain runs to 202 residues: Cytochrome c oxidase assembly protein CtaG (202 aa).

Topologically, residues 1 to 14 are cytoplasmic; sequence MSENAGTPKKQGRN. Residues 15-37 traverse the membrane as a helical; Signal-anchor for type II membrane protein segment; that stretch reads NGAVVMMCLSFVFGMGAMSYAAV. Residues 38-202 lie on the Periplasmic side of the membrane; sequence PLYRIFCQVT…GGAEKIEKKL (165 aa).

The protein belongs to the COX11/CtaG family.

The protein localises to the cell inner membrane. Functionally, exerts its effect at some terminal stage of cytochrome c oxidase synthesis, probably by being involved in the insertion of the copper B into subunit I. The sequence is that of Cytochrome c oxidase assembly protein CtaG from Rhizobium johnstonii (strain DSM 114642 / LMG 32736 / 3841) (Rhizobium leguminosarum bv. viciae).